Consider the following 43-residue polypeptide: Ferritin light chain (43 aa).

The region spanning 1–43 (MEAALLVEKNLNQALLDLHGLASARGDPHICDFLENHFLDEEV) is the Ferritin-like diiron domain.

It belongs to the ferritin family. In terms of assembly, oligomer of 24 subunits. There are two types of subunits: L (light) chain and H (heavy) chain. The major chain can be light or heavy, depending on the species and tissue type. The functional molecule forms a roughly spherical shell with a diameter of 12 nm and contains a central cavity into which the insoluble mineral iron core is deposited. Interacts with NCOA4.

The protein resides in the cytoplasmic vesicle. Its subcellular location is the autophagosome. It localises to the cytoplasm. The protein localises to the autolysosome. Its function is as follows. Stores iron in a soluble, non-toxic, readily available form. Important for iron homeostasis. Iron is taken up in the ferrous form and deposited as ferric hydroxides after oxidation. Also plays a role in delivery of iron to cells. Mediates iron uptake in capsule cells of the developing kidney. Delivery to lysosomes by the cargo receptor NCOA4 for autophagic degradation and release or iron. The sequence is that of Ferritin light chain (FTL) from Ovis aries (Sheep).